The chain runs to 424 residues: Glutamyl-tRNA reductase (424 aa).

Substrate contacts are provided by residues 53–56 (TCNR), Ser-111, 116–118 (EPQ), and Gln-122. Cys-54 (nucleophile) is an active-site residue. 191-196 (GAGEMI) lines the NADP(+) pocket.

The protein belongs to the glutamyl-tRNA reductase family. As to quaternary structure, homodimer.

The catalysed reaction is (S)-4-amino-5-oxopentanoate + tRNA(Glu) + NADP(+) = L-glutamyl-tRNA(Glu) + NADPH + H(+). Its pathway is porphyrin-containing compound metabolism; protoporphyrin-IX biosynthesis; 5-aminolevulinate from L-glutamyl-tRNA(Glu): step 1/2. Its function is as follows. Catalyzes the NADPH-dependent reduction of glutamyl-tRNA(Glu) to glutamate 1-semialdehyde (GSA). In Bordetella avium (strain 197N), this protein is Glutamyl-tRNA reductase.